Reading from the N-terminus, the 1563-residue chain is NACHT domain- and WD repeat-containing protein 1 (1563 aa).

The stretch at 274-314 (TNHQVLEQLRELELARQELGWLYQEIRHHLWQSTESTKVFC) is one WD 1 repeat. The NACHT domain occupies 336 to 666 (TPLVLFGPPG…HRQLSQVIQV (331 aa)). 342–349 (GPPGIGKT) serves as a coordination point for ATP. WD repeat units lie at residues 866 to 905 (GCHK…VVHV), 908 to 947 (GHTA…EKVT), 954 to 994 (QNPT…LVFC), 998 to 1037 (DVSD…LQEK), 1044 to 1082 (KEET…LLEK), 1126 to 1165 (EHED…TLLN), 1168 to 1207 (EGVG…KLQS), 1212 to 1251 (LDRT…EQDC), 1253 to 1292 (DTSN…DVLC), 1346 to 1385 (QLPE…FPLE), 1386 to 1425 (AHGS…GMFE), and 1431 to 1470 (SCCR…LLAV). The tract at residues 1534-1563 (AAEASQDAEPVAVEGKESKSNKRSQVCLIL) is disordered.

As to quaternary structure, may interact with HSP90AA1, HSP90AB1 and BAG2.

It is found in the cytoplasm. The protein localises to the cytosol. Functionally, may play a role in the control of androgen receptor (AR) protein steady-state levels. This is NACHT domain- and WD repeat-containing protein 1 (Nwd1) from Mus musculus (Mouse).